We begin with the raw amino-acid sequence, 581 residues long: Peptidyl-prolyl cis-trans isomerase FKBP10 (581 aa).

A signal peptide spans 1 to 33 (MFLVGSSSHTLHRLRILPLLLLLQTLERGLGRA). 3 consecutive PPIase FKBP-type domains span residues 61–149 (GDFV…LDVW), 173–261 (SDFV…LDVH), and 285–373 (GDFM…IDFH). Asn-69, Asn-181, Asn-293, Asn-309, Asn-351, Asn-392, and Asn-406 each carry an N-linked (GlcNAc...) asparagine glycan. One can recognise a PPIase FKBP-type 4 domain in the interval 398–485 (GDFIRYHYNC…LFEVELVSRE (88 aa)). 2 consecutive EF-hand domains span residues 496-531 (WYQD…QVNE) and 541-576 (DPDK…DQER). Positions 509, 511, 513, 515, 520, 554, 556, 558, 560, and 565 each coordinate Ca(2+). The interval 533 to 581 (KGRLMPGQDPDKTISDMFQNQDRNQDGKITAEELKLKSDEDQERVHEEL) is disordered. Residues 555 to 581 (RNQDGKITAEELKLKSDEDQERVHEEL) show a composition bias toward basic and acidic residues. The Prevents secretion from ER motif lies at 578–581 (HEEL).

Post-translationally, N-glycosylated. Phosphorylated. Expressed in aorta, brain, heart, kidney, lung, spleen and testis. Not detected in liver.

Its subcellular location is the endoplasmic reticulum lumen. The catalysed reaction is [protein]-peptidylproline (omega=180) = [protein]-peptidylproline (omega=0). Inhibited by both FK506 and rapamycin, but not by cyclosporin A. Its function is as follows. PPIases accelerate the folding of proteins during protein synthesis. The chain is Peptidyl-prolyl cis-trans isomerase FKBP10 (Fkbp10) from Mus musculus (Mouse).